Reading from the N-terminus, the 410-residue chain is Diguanylate cyclase DgcM (410 aa).

2 consecutive PAS domains span residues Thr-3–Asp-70 and Gly-129–Gly-198. Positions Gly-199–His-251 constitute a PAC domain. The region spanning Gln-283–Ala-410 is the GGDEF domain. Asp-291 contacts Mg(2+). 3 residues coordinate substrate: Asn-299, His-304, and Asp-308. Glu-334 serves as a coordination point for Mg(2+). The active-site Proton acceptor is Glu-334.

Forms homodimers and homotetramers. Interacts with PdeR and MlrA. The cofactor is Mg(2+).

It catalyses the reaction 2 GTP = 3',3'-c-di-GMP + 2 diphosphate. The protein operates within purine metabolism; 3',5'-cyclic di-GMP biosynthesis. With respect to regulation, activity is inhibited by the phosphodiesterase PdeR. Inhibition is relieved by high cellular c-di-GMP levels. Its function is as follows. Part of a signaling cascade that regulates curli biosynthesis. The cascade is composed of two cyclic-di-GMP (c-di-GMP) control modules, in which c-di-GMP controlled by the DgcE/PdeH pair (module I) regulates the activity of the DgcM/PdeR pair (module II), which in turn regulates activity of the transcription factor MlrA and expression of the master biofilm regulator csgD. DgcM stimulates activity of MlrA by direct interaction, leading to the transcription of csgD. It also catalyzes the synthesis of c-di-GMP via the condensation of 2 GTP molecules, which contributes to the c-di-GMP pool generated by module I in a positive feedback loop. Production of c-di-GMP contributes to but is not essential for MlrA activation. The polypeptide is Diguanylate cyclase DgcM (Escherichia coli (strain K12)).